A 399-amino-acid chain; its full sequence is UDP-N-acetylglucosamine--N-acetylmuramyl-(pentapeptide) pyrophosphoryl-undecaprenol N-acetylglucosamine transferase (399 aa).

A compositionally biased stretch (basic residues) spans 1-21 (MTSRFGHSHHPRRGRSARARA). The segment at 1–30 (MTSRFGHSHHPRRGRSARARAGRREGVQSN) is disordered. Residues 58–60 (TGG), Asn170, Arg206, Ser234, Ile288, and Gln333 contribute to the UDP-N-acetyl-alpha-D-glucosamine site.

Belongs to the glycosyltransferase 28 family. MurG subfamily.

It localises to the cell inner membrane. It carries out the reaction di-trans,octa-cis-undecaprenyl diphospho-N-acetyl-alpha-D-muramoyl-L-alanyl-D-glutamyl-meso-2,6-diaminopimeloyl-D-alanyl-D-alanine + UDP-N-acetyl-alpha-D-glucosamine = di-trans,octa-cis-undecaprenyl diphospho-[N-acetyl-alpha-D-glucosaminyl-(1-&gt;4)]-N-acetyl-alpha-D-muramoyl-L-alanyl-D-glutamyl-meso-2,6-diaminopimeloyl-D-alanyl-D-alanine + UDP + H(+). It participates in cell wall biogenesis; peptidoglycan biosynthesis. Its function is as follows. Cell wall formation. Catalyzes the transfer of a GlcNAc subunit on undecaprenyl-pyrophosphoryl-MurNAc-pentapeptide (lipid intermediate I) to form undecaprenyl-pyrophosphoryl-MurNAc-(pentapeptide)GlcNAc (lipid intermediate II). In Acidovorax ebreus (strain TPSY) (Diaphorobacter sp. (strain TPSY)), this protein is UDP-N-acetylglucosamine--N-acetylmuramyl-(pentapeptide) pyrophosphoryl-undecaprenol N-acetylglucosamine transferase.